Reading from the N-terminus, the 194-residue chain is ATP-dependent Clp protease proteolytic subunit (194 aa).

Residue Ser-97 is the Nucleophile of the active site. The active site involves His-122.

Belongs to the peptidase S14 family. As to quaternary structure, fourteen ClpP subunits assemble into 2 heptameric rings which stack back to back to give a disk-like structure with a central cavity, resembling the structure of eukaryotic proteasomes.

The protein localises to the cytoplasm. The enzyme catalyses Hydrolysis of proteins to small peptides in the presence of ATP and magnesium. alpha-casein is the usual test substrate. In the absence of ATP, only oligopeptides shorter than five residues are hydrolyzed (such as succinyl-Leu-Tyr-|-NHMec, and Leu-Tyr-Leu-|-Tyr-Trp, in which cleavage of the -Tyr-|-Leu- and -Tyr-|-Trp bonds also occurs).. In terms of biological role, cleaves peptides in various proteins in a process that requires ATP hydrolysis. Has a chymotrypsin-like activity. Plays a major role in the degradation of misfolded proteins. This is ATP-dependent Clp protease proteolytic subunit from Carsonella ruddii (strain PV).